A 147-amino-acid polypeptide reads, in one-letter code: 3-dehydroquinate dehydratase (147 aa).

Tyr-22 functions as the Proton acceptor in the catalytic mechanism. Positions 74, 80, and 87 each coordinate substrate. His-101 (proton donor) is an active-site residue. Substrate contacts are provided by residues 102–103 (IS) and Arg-112.

It belongs to the type-II 3-dehydroquinase family. In terms of assembly, homododecamer.

The enzyme catalyses 3-dehydroquinate = 3-dehydroshikimate + H2O. Its pathway is metabolic intermediate biosynthesis; chorismate biosynthesis; chorismate from D-erythrose 4-phosphate and phosphoenolpyruvate: step 3/7. Its function is as follows. Catalyzes a trans-dehydration via an enolate intermediate. This chain is 3-dehydroquinate dehydratase, found in Lachnospira eligens (strain ATCC 27750 / DSM 3376 / VPI C15-48 / C15-B4) (Eubacterium eligens).